Reading from the N-terminus, the 351-residue chain is S-adenosylmethionine:tRNA ribosyltransferase-isomerase (351 aa).

This sequence belongs to the QueA family. In terms of assembly, monomer.

The protein localises to the cytoplasm. It carries out the reaction 7-aminomethyl-7-carbaguanosine(34) in tRNA + S-adenosyl-L-methionine = epoxyqueuosine(34) in tRNA + adenine + L-methionine + 2 H(+). It functions in the pathway tRNA modification; tRNA-queuosine biosynthesis. In terms of biological role, transfers and isomerizes the ribose moiety from AdoMet to the 7-aminomethyl group of 7-deazaguanine (preQ1-tRNA) to give epoxyqueuosine (oQ-tRNA). The chain is S-adenosylmethionine:tRNA ribosyltransferase-isomerase from Hydrogenovibrio crunogenus (strain DSM 25203 / XCL-2) (Thiomicrospira crunogena).